The following is a 238-amino-acid chain: Orotidine 5'-phosphate decarboxylase (238 aa).

Residues Asp10, Lys32, 59 to 68 (DLKLHDIPNT), Thr122, Arg184, Gln193, Gly213, and Arg214 contribute to the substrate site. Lys61 functions as the Proton donor in the catalytic mechanism.

The protein belongs to the OMP decarboxylase family. Type 1 subfamily. In terms of assembly, homodimer.

It catalyses the reaction orotidine 5'-phosphate + H(+) = UMP + CO2. It functions in the pathway pyrimidine metabolism; UMP biosynthesis via de novo pathway; UMP from orotate: step 2/2. Its function is as follows. Catalyzes the decarboxylation of orotidine 5'-monophosphate (OMP) to uridine 5'-monophosphate (UMP). The chain is Orotidine 5'-phosphate decarboxylase from Bacillus cereus (strain ATCC 10987 / NRS 248).